The sequence spans 486 residues: Glutamyl-tRNA(Gln) amidotransferase subunit A (486 aa).

Residues Lys-79 and Ser-154 each act as charge relay system in the active site. Ser-178 (acyl-ester intermediate) is an active-site residue.

The protein belongs to the amidase family. GatA subfamily. As to quaternary structure, heterotrimer of A, B and C subunits.

It carries out the reaction L-glutamyl-tRNA(Gln) + L-glutamine + ATP + H2O = L-glutaminyl-tRNA(Gln) + L-glutamate + ADP + phosphate + H(+). In terms of biological role, allows the formation of correctly charged Gln-tRNA(Gln) through the transamidation of misacylated Glu-tRNA(Gln) in organisms which lack glutaminyl-tRNA synthetase. The reaction takes place in the presence of glutamine and ATP through an activated gamma-phospho-Glu-tRNA(Gln). The polypeptide is Glutamyl-tRNA(Gln) amidotransferase subunit A (Myxococcus xanthus (strain DK1622)).